Consider the following 161-residue polypeptide: Calmodulin-like protein (161 aa).

EF-hand domains follow at residues 21–56, 57–92, 93–128, and 129–161; these read EEID…LGQN, PTEQ…MMKE, TDSE…MGMQ, and FSEE…MSNQ. Ca(2+) is bound by residues D34, D36, N38, T40, E45, D70, D72, N74, Q76, E81, D106, D108, N110, E117, D142, D144, D146, E148, and E153.

This sequence belongs to the calmodulin family.

In terms of biological role, this protein resembles calmodulin in sequence but possibly resembles troponin C in function. The sequence is that of Calmodulin-like protein (cal-1) from Caenorhabditis elegans.